A 308-amino-acid polypeptide reads, in one-letter code: 26S proteasome regulatory subunit rpn11 (308 aa).

An MPN domain is found at 30-165 (VYISSLALLK…IDAFRLINPS (136 aa)). Residues histidine 112, histidine 114, and aspartate 125 each coordinate Zn(2+). Positions 112 to 125 (HSHPGFGCWLSSVD) match the JAMM motif motif.

This sequence belongs to the peptidase M67A family. The 26S proteasome is composed of a core protease, known as the 20S proteasome, capped at one or both ends by the 19S regulatory complex (RC). The RC is composed of at least 18 different subunits in two subcomplexes, the base and the lid, which form the portions proximal and distal to the 20S proteolytic core, respectively.

Its function is as follows. Acts as a regulatory subunit of the 26 proteasome which is involved in the ATP-dependent degradation of ubiquitinated proteins. Transcription factor pap1 is controlled by the functional interaction between the positive regulator pad1 and negative regulator crm1. Both these proteins are also essential for cell viability and for the maintenance of chromosome structure. Pad1 is also responsible for resistance to staurosporine, and other drugs such as cycloheximide and caffeine. This Schizosaccharomyces pombe (strain 972 / ATCC 24843) (Fission yeast) protein is 26S proteasome regulatory subunit rpn11 (rpn11).